Consider the following 254-residue polypeptide: PSME3-interacting protein (254 aa).

M1 carries the N-acetylmethionine modification. S17 bears the Phosphoserine mark. Basic and acidic residues predominate over residues 22–39 (DERRKRRQEEWEKVRKPE). A disordered region spans residues 22–52 (DERRKRRQEEWEKVRKPEDPEECPEEVYDPR). Position 139 is an N6-acetyllysine (K139). Positions 155–195 (GAVKHKSSESGNSVKRLKPDPEPDDKNQEPSSCKSLGNTSL) are disordered. Residues 171–182 (LKPDPEPDDKNQ) show a composition bias toward basic and acidic residues. Positions 183–195 (EPSSCKSLGNTSL) are enriched in polar residues. Residues 201-254 (HCPSAAVCIGILPGLGAYSGSSDSESSSDSEGTINATGKIVSSIFRTNTFLEAP) form an interaction with PSME3 region. 2 positions are modified to phosphoserine; by CK2: S222 and S228.

In terms of assembly, interacts (via C-terminus) with both free and 20S proteasome-bound forms of the proteasome activator complex subunit PSME3; the interaction is direct. Phosphorylation by CK2 stabilizes the interaction with PSME3.

The protein localises to the nucleus. In terms of biological role, promotes the association of the proteasome activator complex subunit PSME3 with the 20S proteasome and regulates its activity. Inhibits PSME3-mediated degradation of some proteasome substrates, probably by affecting their diffusion rate into the catalytic chamber of the proteasome. Also inhibits the interaction of PSME3 with COIL, inhibits accumulation of PSME3 in Cajal bodies and positively regulates the number of Cajal bodies in the nucleus. In Homo sapiens (Human), this protein is PSME3-interacting protein.